The sequence spans 399 residues: Phosphoglycerate kinase (399 aa).

Substrate contacts are provided by residues 24 to 26 (DLN), Arg41, 64 to 67 (HLGR), Arg123, and Arg160. ATP is bound by residues Lys210, Gly298, Glu329, and 355–358 (GGDS).

This sequence belongs to the phosphoglycerate kinase family. In terms of assembly, monomer.

It is found in the cytoplasm. It catalyses the reaction (2R)-3-phosphoglycerate + ATP = (2R)-3-phospho-glyceroyl phosphate + ADP. Its pathway is carbohydrate degradation; glycolysis; pyruvate from D-glyceraldehyde 3-phosphate: step 2/5. The sequence is that of Phosphoglycerate kinase from Salinispora arenicola (strain CNS-205).